The chain runs to 497 residues: DNA-dependent metalloprotease SPRTN (497 aa).

N-acetylmethionine is present on Met-1. Residues 46-213 form the SprT-like domain; sequence LQALFLQFND…KTCGGTYIKI (168 aa). His-112 is a Zn(2+) binding site. The active site involves Glu-113. Positions 116 and 131 each coordinate Zn(2+). N6-acetyllysine is present on Lys-231. Positions 254-262 match the SHP-box motif; that stretch reads FSGKGYVLG. Ser-269 carries the post-translational modification Phosphoserine. Lys-304 participates in a covalent cross-link: Glycyl lysine isopeptide (Lys-Gly) (interchain with G-Cter in SUMO2). Residues 326–333 carry the PIP-box motif; it reads QSVLSSYF. Lys-342 participates in a covalent cross-link: Glycyl lysine isopeptide (Lys-Gly) (interchain with G-Cter in SUMO2); alternate. A Glycyl lysine isopeptide (Lys-Gly) (interchain with G-Cter in ubiquitin); alternate cross-link involves residue Lys-342. The segment at 344-459 is disordered; that stretch reads FRNVNGSPVK…ASAPQSLSSQ (116 aa). The span at 347 to 356 shows a compositional bias: polar residues; sequence VNGSPVKNGT. Lys-362 participates in a covalent cross-link: Glycyl lysine isopeptide (Lys-Gly) (interchain with G-Cter in SUMO2). Low complexity predominate over residues 383-404; it reads TSKVTAPASATVTSAAGTSATI. The residue at position 384 (Ser-384) is a Phosphoserine. The Nuclear localization signal motif lies at 413–424; sequence DQFLNKRPRLED. Residues 420 to 432 are compositionally biased toward basic and acidic residues; sequence PRLEDRTALDTIK. Lys-432 participates in a covalent cross-link: Glycyl lysine isopeptide (Lys-Gly) (interchain with G-Cter in SUMO2). Over residues 442-459 the composition is skewed to low complexity; sequence RSSSQPTAASAPQSLSSQ. The segment at 462–489 adopts a UBZ4-type zinc-finger fold; it reads LVNCPVCQGVVVESQINEHLDRCLEGNK. 4 residues coordinate Zn(2+): Cys-465, Cys-468, His-480, and Cys-484.

This sequence belongs to the Spartan family. In terms of assembly, homodimer. Interacts (VIA PIP-box) with PCNA (when ubiquitinated). Interacts (via its SHP-box) with VCP/p97. Interacts with RAD18. Interacts with KCTD13 and POLD3. It depends on Zn(2+) as a cofactor. Post-translationally, autocatalytically cleaved in response to double-stranded DNA-binding: autocatalytic cleavage takes place in trans and leads to inactivation. In terms of processing, monoubiquitinated; monoubiquitination promotes exclusion from chromatin. Deubiquitinated by VCPIP1: deubiquitination is required for subsequent acetylation and recruitment to chromatin and DNA damage sites. Acetylated following deubiquitination by VCPIP1, leading to recruitment to chromatin and DNA damage sites. Post-translationally, phosphorylation by CHEK1 promotes recruitment to chromatin.

It localises to the nucleus. The protein localises to the chromosome. Its activity is regulated as follows. DNA-binding activates the protease activity: single-stranded DNA-binding specifically activates ability to cleave covalent DNA-protein cross-links (DPCs). In contrast, double-stranded DNA-binding specifically activates autocatalytic cleavage, and subsequent inactivation. In terms of biological role, DNA-dependent metalloendopeptidase that mediates the proteolytic cleavage of covalent DNA-protein cross-links (DPCs) during DNA synthesis, thereby playing a key role in maintaining genomic integrity. DPCs are highly toxic DNA lesions that interfere with essential chromatin transactions, such as replication and transcription, and which are induced by reactive agents, such as UV light or formaldehyde. Associates with the DNA replication machinery and specifically removes DPCs during DNA synthesis. Catalyzes proteolytic cleavage of the HMCES DNA-protein cross-link following unfolding by the BRIP1/FANCJ helicase. Acts as a pleiotropic protease for DNA-binding proteins cross-linked with DNA, such as TOP1, TOP2A, histones H3 and H4. Mediates degradation of DPCs that are not ubiquitinated, while it is not able to degrade ubiquitinated DPCs. SPRTN activation requires polymerase collision with DPCs followed by helicase bypass of DPCs. Involved in recruitment of VCP/p97 to sites of DNA damage. Also acts as an activator of CHEK1 during normal DNA replication by mediating proteolytic cleavage of CHEK1, thereby promoting CHEK1 removal from chromatin and subsequent activation. Does not activate CHEK1 in response to DNA damage. May also act as a 'reader' of ubiquitinated PCNA: recruited to sites of UV damage and interacts with ubiquitinated PCNA and RAD18, the E3 ubiquitin ligase that monoubiquitinates PCNA. Facilitates chromatin association of RAD18 and is required for efficient PCNA monoubiquitination, promoting a feed-forward loop to enhance PCNA ubiquitination and translesion DNA synthesis. This is DNA-dependent metalloprotease SPRTN from Mus musculus (Mouse).